A 245-amino-acid polypeptide reads, in one-letter code: 1-(5-phosphoribosyl)-5-[(5-phosphoribosylamino)methylideneamino] imidazole-4-carboxamide isomerase (245 aa).

The active-site Proton acceptor is the Asp8. Catalysis depends on Asp130, which acts as the Proton donor.

The protein belongs to the HisA/HisF family.

Its subcellular location is the cytoplasm. It carries out the reaction 1-(5-phospho-beta-D-ribosyl)-5-[(5-phospho-beta-D-ribosylamino)methylideneamino]imidazole-4-carboxamide = 5-[(5-phospho-1-deoxy-D-ribulos-1-ylimino)methylamino]-1-(5-phospho-beta-D-ribosyl)imidazole-4-carboxamide. The protein operates within amino-acid biosynthesis; L-histidine biosynthesis; L-histidine from 5-phospho-alpha-D-ribose 1-diphosphate: step 4/9. This Pseudomonas syringae pv. tomato (strain ATCC BAA-871 / DC3000) protein is 1-(5-phosphoribosyl)-5-[(5-phosphoribosylamino)methylideneamino] imidazole-4-carboxamide isomerase.